The chain runs to 199 residues: Probable GTP-binding protein EngB (199 aa).

In terms of domain architecture, EngB-type G spans 25 to 199; the sequence is IGMEVAFVGY…LKRVLNNWLR (175 aa). Mg(2+)-binding residues include Ser40 and Thr62.

It belongs to the TRAFAC class TrmE-Era-EngA-EngB-Septin-like GTPase superfamily. EngB GTPase family. It depends on Mg(2+) as a cofactor.

In terms of biological role, necessary for normal cell division and for the maintenance of normal septation. This chain is Probable GTP-binding protein EngB, found in Blochmanniella pennsylvanica (strain BPEN).